The sequence spans 402 residues: MRFIDEAIVTVKAGDGGNGIVSFRREKYVPRGGPDGGDGGKGGDVFVVADDNTNTLVDYRYTRRYDAGRGENGHSKNCSGKGADNIYLRVPIGTTIVNNETGEVIGDLTEIGQELLIAKGGDGGLGNTHFKSSTNQAPRKATSGFEGELKELKFELKVVADVGLIGLPNAGKSTFIRQVSSAKPKVADYPFTTLVPNLGVVDVGVHRSFVMADIPGLIEGASEGAGLGIRFLKHVARTRRLLHILDIKPIDGSDPVENGRVILNELERFSPELANLPQILILNKIDQVPDADELNELCLHIVAELGWTGAVFRTSTLTGAGVDDVKYHLMNEIEREQEREEEDPMFAQAQKERFERLEAEVRLNTEEQKEAYRAARRAAREAAFNNELDDDDDDGVEVVYAP.

The Obg domain maps to Met-1 to Val-159. Positions Ala-160–Glu-334 constitute an OBG-type G domain. GTP is bound by residues Gly-166–Ser-173, Phe-191–Val-195, Asp-213–Gly-216, Asn-283–Asp-286, and Ser-315–Leu-317. Positions 173 and 193 each coordinate Mg(2+). Residues Ala-382–Pro-402 form a disordered region. Positions Glu-387–Val-396 are enriched in acidic residues.

The protein belongs to the TRAFAC class OBG-HflX-like GTPase superfamily. OBG GTPase family. As to quaternary structure, monomer. Requires Mg(2+) as cofactor.

Its subcellular location is the cytoplasm. In terms of biological role, an essential GTPase which binds GTP, GDP and possibly (p)ppGpp with moderate affinity, with high nucleotide exchange rates and a fairly low GTP hydrolysis rate. Plays a role in control of the cell cycle, stress response, ribosome biogenesis and in those bacteria that undergo differentiation, in morphogenesis control. The sequence is that of GTPase Obg from Psychrobacter sp. (strain PRwf-1).